The following is a 750-amino-acid chain: Tegument protein UL46 homolog (750 aa).

Disordered stretches follow at residues 437–484 (FCCP…SPRT), 525–593 (QRSD…DYMR), 610–669 (YTPY…EVVY), and 692–750 (SASR…VSSL). Residues 465–484 (LRSSRQLPTSPPSNIVSPRT) are compositionally biased toward polar residues. Residues 528-540 (DSSSSDNSTCSST) show a composition bias toward low complexity. Over residues 541–553 (ETQYITLPSTPSP) the composition is skewed to polar residues. Basic and acidic residues-rich tracts occupy residues 710-727 (VCRE…DGFI) and 739-750 (KHPDQTERVSSL).

This sequence belongs to the herpesviridae HHV-1 VP11/12 protein family.

It is found in the virion tegument. It localises to the host cell membrane. Modulates alpha trans-inducing factor-dependent activation of alpha genes. In Equine herpesvirus 1 (strain V592) (EHV-1), this protein is Tegument protein UL46 homolog.